We begin with the raw amino-acid sequence, 284 residues long: Formyltetrahydrofolate deformylase (284 aa).

Residues 7-90 (TLLVSCPDQP…QIHFSDQLPR (84 aa)) enclose the ACT domain. The active site involves aspartate 228.

Belongs to the PurU family.

It catalyses the reaction (6R)-10-formyltetrahydrofolate + H2O = (6S)-5,6,7,8-tetrahydrofolate + formate + H(+). It participates in purine metabolism; IMP biosynthesis via de novo pathway; formate from 10-formyl-5,6,7,8-tetrahydrofolate: step 1/1. Catalyzes the hydrolysis of 10-formyltetrahydrofolate (formyl-FH4) to formate and tetrahydrofolate (FH4). The protein is Formyltetrahydrofolate deformylase of Synechocystis sp. (strain ATCC 27184 / PCC 6803 / Kazusa).